We begin with the raw amino-acid sequence, 1104 residues long: Transient receptor potential cation channel subfamily M member 8 (1104 aa).

The tract at residues 1 to 22 is disordered; that stretch reads MSFEGARLSMRSRRNGTMGSTR. Residues 1–733 are Cytoplasmic-facing; the sequence is MSFEGARLSM…LWYYVAFFTS (733 aa). A helical transmembrane segment spans residues 734–758; that stretch reads PFVVFSWNVVFYIAFLLLFAYVLLM. Residues 759–765 lie on the Extracellular side of the membrane; sequence DFHSVPH. The helical transmembrane segment at 766–789 threads the bilayer; sequence TPELILYALVFVLFCDEVRQWYMN. Ca(2+) is bound by residues E782 and Q785. The Cytoplasmic portion of the chain corresponds to 790 to 796; it reads GVNYFTD. The helical transmembrane segment at 797–817 threads the bilayer; sequence LWNVMDTLGLFYFIAGIVFRL. Ca(2+) is bound by residues N799 and D802. Residues 818 to 822 are Extracellular-facing; sequence HSSNK. A helical transmembrane segment spans residues 823–848; it reads SSLYSGRVIFCLDYIIFTLRLIHIFT. At 849–853 the chain is on the cytoplasmic side; sequence VSRNL. A helical transmembrane segment spans residues 854-890; it reads GPKIIMLQRMLIDVFFFLFLFAVWMVAFGVARQGILR. Over 891–895 the chain is Extracellular; the sequence is QNEQR. An intramembrane region (pore-forming) is located at residues 896 to 912; it reads WRWIFRSVIYEPYLAMF. Residues 913 to 953 lie on the Extracellular side of the membrane; sequence GQVPSDVDSTTYDFSHCTFSGNESKPLCVELDEHNLPRFPE. N934 is a glycosylation site (N-linked (GlcNAc...) (complex) asparagine). A helical membrane pass occupies residues 954–984; the sequence is WITIPLVCIYMLSTNILLVNLLVAMFGYTVG. Residues 985 to 1104 lie on the Cytoplasmic side of the membrane; sequence IVQENNDQVW…LLKEIANNIK (120 aa). Residues 1069–1104 adopt a coiled-coil conformation; the sequence is TKANDNSEEMRHRFRQLDSKLNDLKSLLKEIANNIK.

The protein belongs to the transient receptor (TC 1.A.4) family. LTrpC subfamily. TRPM8 sub-subfamily. In terms of assembly, homotetramer. Interacts (via N-terminus and C-terminus domains) with TCAF1; the interaction stimulates TRPM8 channel activity. Interacts (via N-terminus and C-terminus domains) with TCAF2; the interaction inhibits TRPM8 channel activity. Post-translationally, N-glycosylation is not essential for but facilitates cell surface expression, multimerization, association with lipid rafts and ion channel activity. In terms of tissue distribution, expressed in dorsal root and trigeminal ganglia. Specifically expressed in a subset of pain- and temperature-sensing neurons. Not expressed in heavily myelinated neurons. Not expressed in neurons expressing TRPA1 or TRPV1.

The protein localises to the cell membrane. It localises to the membrane raft. The enzyme catalyses Ca(2+)(in) = Ca(2+)(out). The catalysed reaction is Na(+)(in) = Na(+)(out). It catalyses the reaction K(+)(in) = K(+)(out). Activated by cold temperatures and by both natural and synthetic cooling compounds such as menthol and icilin. Activation of the channel requires the presence of PI(4,5)P2; PI(4,5)P2 is necessary to gate the channel. Activated by intracellular Ca(2+). Its function is as follows. Non-selective ion channel permeable to monovalent and divalent cations, including Na(+), K(+), and Ca(2+), with higher permeability for Ca(2+). Activated by multiple factors, such as temperature, voltage, pressure, and changes in osmolality. Activated by cool temperatures (&lt;23-28 degrees Celsius) and by chemical ligands evoking a sensation of coolness, such as menthol and icilin, therefore plays a central role in the detection of environmental cold temperatures. TRPM8 is a voltage-dependent channel; its activation by cold or chemical ligands shifts its voltage thresholds towards physiological membrane potentials, leading to the opening of the channel. In addition to its critical role in temperature sensing, regulates basal tear secretion by sensing evaporation-induced cooling and changes in osmolality. The protein is Transient receptor potential cation channel subfamily M member 8 (Trpm8) of Mus musculus (Mouse).